Consider the following 634-residue polypeptide: MSGEIFYSVDNLYDLDSANCHPLVCHLCQEQYEHPCLLDCYHTFCASCLRGRVADSRLTCPVCGHQSVVKGINALPPEDRLLKFLVDSSADSEETVQCANCDLECKKQDVDAMYYCNTCCQPLCRDCRETTHKAKMFSRHEIVSLAKRTKEAHKKCALHEEFYIMFSTEKKSMLCINCFRDMQVESRAHCIDIETAYIQGCEKLDQAVLAVKELQMSAREAIILLKAMIGEVRANVDEEESAICTLFSNMQEKLAERKKILLKAARSQHEEKERTFKEQLSHLAALLPTLQVHLVTCSAFLSSANKFEFLDMGYQLMERLKKIVKLPHRLRPTQSSKINTEYRSEFARCLEPLLLLGQRRSMSTTGSVALALGNASGLMQSSLSVQCHSPAMSDMSLCSSVVRRPTSHRYISTKVLLAKGGETPFMEHCCNYENSYRTLQTEIQKLKDQVQEIHRDLTKHHSLTKPDSMSEILEKSVQVDSQISSEYASVELMRAMFEEIWEETLQRVANEQEIYEAQLHDLLQLKQENSYLTTISRQIGPYIRSIAKVKERLEPRLKEPKELKDDRTEIMLKLYEDSTSTADTQPSNELSCNTEDNWTLNSLSEETNPKNKDYYRTNKQKNTTDSTNRKEIPM.

The RING-type zinc-finger motif lies at C25–C63. The segment at E93–L145 adopts a B box-type; atypical zinc-finger fold. Residues C98, C101, C127, and H132 each contribute to the Zn(2+) site. Residues Y575 to M634 form a disordered region. Residues D577–E606 are compositionally biased toward polar residues. Over residues T607 to R616 the composition is skewed to basic and acidic residues.

It localises to the cytoplasm. Functionally, plays a role in cardiac repolarization possibly by stabilizing membrane expression of the potassium channel kcnh6a/zerg, or by assisting its synthesis, folding or export from the endoplasmic reticulum, in a heat shock protein-dependent manner. This Danio rerio (Zebrafish) protein is RING finger protein 207 (rnf207b).